The primary structure comprises 409 residues: Histone deacetylase 7 (409 aa).

Residues 11–324 (RVSYFYEPMI…WCYETAIAVG (314 aa)) form a histone deacetylase region. The Proton donor/acceptor role is filled by His-148. Zn(2+) is bound at residue Asp-267. Positions 383 to 409 (PFQDTPSSSQATEAAEVDMEKRNDPRI) are disordered. The segment covering 384-394 (FQDTPSSSQAT) has biased composition (polar residues). A compositionally biased stretch (basic and acidic residues) spans 400–409 (DMEKRNDPRI).

Belongs to the histone deacetylase family. HD type 1 subfamily. The cofactor is Zn(2+). Low expression in flowers.

It is found in the nucleus. The catalysed reaction is N(6)-acetyl-L-lysyl-[histone] + H2O = L-lysyl-[histone] + acetate. In terms of biological role, responsible for the deacetylation of lysine residues on the N-terminal part of the core histones (H2A, H2B, H3 and H4). Histone deacetylation gives a tag for epigenetic repression and plays an important role in transcriptional regulation, cell cycle progression and developmental events. May be involved in flowering induction. Histone deacetylases act via the formation of large multiprotein complexes. The sequence is that of Histone deacetylase 7 (HDA7) from Arabidopsis thaliana (Mouse-ear cress).